Reading from the N-terminus, the 298-residue chain is 5'-AMP-activated protein kinase subunit beta (298 aa).

The tract at residues 1 to 98 (MGNVQSQEGE…KTHQPYSGPC (98 aa)) is disordered. Polar residues predominate over residues 19-30 (QDATTTPDNANN). The span at 48-59 (LNQEGEMSDDNQ) shows a compositional bias: acidic residues. Residues 60-77 (QEGGNNRTSQNGTSGSSG) show a composition bias toward polar residues. A compositionally biased stretch (basic residues) spans 78–91 (HTKRRSQTSGKKTH). 250 to 252 (DQS) contributes to the ADP binding site.

This sequence belongs to the 5'-AMP-activated protein kinase beta subunit family. AMPK is a heterotrimer of an alpha catalytic subunit (ssp2), a beta (amk2) and a gamma non-catalytic subunits (cbs2). The beta subunit serves as a bridge between the catalytic and the regulatory subunit.

The protein resides in the cytoplasm. Functionally, beta subunit of AMP-activated protein kinase (AMPK), which is required for transcriptional, metabolic, and developmental adaptations in response to glucose limitation. Has a structural role, mediating heterotrimer formation, and a regulatory role, defining carbon source-regulated subcellular location and substrate specificity of the AMPK kinase complex. The sequence is that of 5'-AMP-activated protein kinase subunit beta (amk2) from Schizosaccharomyces pombe (strain 972 / ATCC 24843) (Fission yeast).